The following is a 782-amino-acid chain: Semaphorin-3G (782 aa).

The N-terminal stretch at Met-1–Ser-22 is a signal peptide. The Sema domain occupies Arg-32–Leu-519. Asn-44 is a glycosylation site (N-linked (GlcNAc...) asparagine). The cysteines at positions 105 and 116 are disulfide-linked. Asn-127 carries an N-linked (GlcNAc...) asparagine glycan. Cystine bridges form between Cys-134/Cys-143, Cys-270/Cys-382, Cys-294/Cys-342, Cys-522/Cys-540, and Cys-603/Cys-655. Residues Pro-569–Leu-671 enclose the Ig-like C2-type domain.

It belongs to the semaphorin family.

It localises to the secreted. Functionally, has chemorepulsive activities for sympathetic axons. Ligand of NRP2. This chain is Semaphorin-3G (SEMA3G), found in Homo sapiens (Human).